The primary structure comprises 300 residues: 4-diphosphocytidyl-2-C-methyl-D-erythritol kinase (300 aa).

Residue lysine 12 is part of the active site. 94–104 contacts ATP; sequence PAQAGIGGGSS. Aspartate 136 is a catalytic residue.

The protein belongs to the GHMP kinase family. IspE subfamily.

The catalysed reaction is 4-CDP-2-C-methyl-D-erythritol + ATP = 4-CDP-2-C-methyl-D-erythritol 2-phosphate + ADP + H(+). Its pathway is isoprenoid biosynthesis; isopentenyl diphosphate biosynthesis via DXP pathway; isopentenyl diphosphate from 1-deoxy-D-xylulose 5-phosphate: step 3/6. Its function is as follows. Catalyzes the phosphorylation of the position 2 hydroxy group of 4-diphosphocytidyl-2C-methyl-D-erythritol. This chain is 4-diphosphocytidyl-2-C-methyl-D-erythritol kinase, found in Verminephrobacter eiseniae (strain EF01-2).